The sequence spans 216 residues: Refilin-B (216 aa).

Residues 1–52 form a disordered region; sequence MVGRLSLQDVPELVDTKKKGDGVLDSPDSGLPPSPSPSHWGLAAATGGGGER. Phosphoserine is present on residues Ser6 and Ser26.

This sequence belongs to the Refilin family. In terms of assembly, interacts with FLNA and FLNB.

It localises to the cytoplasm. Its subcellular location is the cytoskeleton. Its function is as follows. Involved in the regulation of the perinuclear actin network and nuclear shape through interaction with filamins. Plays an essential role in the formation of cartilaginous skeletal elements. The sequence is that of Refilin-B from Rattus norvegicus (Rat).